The sequence spans 448 residues: MGPPPAARRREGEPDNQDPAGLLTDKYELTMLAAALRDGSANRPTTFEVFARRLPTGRRYGVVAGTGRLLEALPQFRFDADACELLAQFLDPATVRYLREFRFRGDIDGYAEGELYFPGSPVLSVRGSFAECVLLETLVLSIFNHDTAIASAAARMVSAAGGRPLIEMGSRRTHERAAVAAARAAYIAGFAASSNLAAQRRYGVPAHGTAAHAFTMLHAQHGGPTELAERAAFRAQVEALGPGTTLLVDTYDVTTGVANAVAAAGAELGAIRIDSGELGVLARQAREQLDRLGATRTRIVVSGDLDEFSIAALRGEPVDSYGVGTSLVTGSGAPTANMVYKLVEVDGVPVQKRSSYKESPGGRKEALRRSRATGTITEELVHPAGRPPVIVEPHRVLTLPLVRAGQPVADTSLAAARQLVASGLRSLPADGLKLAPGEPAIPTRTIPA.

A disordered region spans residues 1 to 21 (MGPPPAARRREGEPDNQDPAG). His-212 bears the Phosphohistidine mark. The interval 353 to 372 (RSSYKESPGGRKEALRRSRA) is disordered.

The protein belongs to the NAPRTase family. Post-translationally, transiently phosphorylated on a His residue during the reaction cycle. Phosphorylation strongly increases the affinity for substrates and increases the rate of nicotinate D-ribonucleotide production. Dephosphorylation regenerates the low-affinity form of the enzyme, leading to product release.

The catalysed reaction is nicotinate + 5-phospho-alpha-D-ribose 1-diphosphate + ATP + H2O = nicotinate beta-D-ribonucleotide + ADP + phosphate + diphosphate. Its pathway is cofactor biosynthesis; NAD(+) biosynthesis; nicotinate D-ribonucleotide from nicotinate: step 1/1. In terms of biological role, involved in the Preiss-Handler pathway, which is a recycling route that permits the salvage of free nicotinamide (NM) and nicotinic acid (Na) involved in the NAD biosynthesis. Catalyzes the synthesis of beta-nicotinate D-ribonucleotide from nicotinate and 5-phospho-D-ribose 1-phosphate at the expense of ATP. It is not able to use nicotinamide. PncB1 contributes to basal NAD level. This is Nicotinate phosphoribosyltransferase pncB1 (pncB1) from Mycobacterium tuberculosis (strain CDC 1551 / Oshkosh).